Here is a 478-residue protein sequence, read N- to C-terminus: ATP-dependent RNA helicase DDX19A (478 aa).

Alanine 2 carries the N-acetylalanine modification. The tract at residues 2-299 (ATDSWALAVD…DPNVIKLKRE (298 aa)) is N-terminal lobe. Lysine 26 participates in a covalent cross-link: Glycyl lysine isopeptide (Lys-Gly) (interchain with G-Cter in SUMO1); alternate. A Glycyl lysine isopeptide (Lys-Gly) (interchain with G-Cter in SUMO2); alternate cross-link involves residue lysine 26. Position 42 is a phosphothreonine (threonine 42). Positions 54 to 67 (DRAAQSLLNKLIRS) are N-terminal helix. The Q motif motif lies at 91–119 (KSFEELRLKPQLLQGVYAMGFNRPSKIQE). ATP contacts are provided by residues glutamine 118 and 137–144 (SQSGTGKT). The Helicase ATP-binding domain occupies 124–294 (MMLAEPPQNL…QKVVPDPNVI (171 aa)). The short motif at 241-244 (DEAD) is the DEAD box element. The C-terminal lobe stretch occupies residues 300–478 (EETLDTIKQY…DLDEIEKIAN (179 aa)). Residues 305–473 (TIKQYYVLCS…RLDTDDLDEI (169 aa)) enclose the Helicase C-terminal domain. ATP contacts are provided by arginine 428 and arginine 431.

It belongs to the DEAD box helicase family. DDX19/DBP5 subfamily.

Its subcellular location is the cytoplasm. It localises to the nucleus. The protein resides in the nucleoplasm. It carries out the reaction ATP + H2O = ADP + phosphate + H(+). In terms of biological role, ATP-dependent RNA helicase involved in mRNA export from the nucleus. Rather than unwinding RNA duplexes, DDX19 functions as a remodeler of ribonucleoprotein particles, whereby proteins bound to nuclear mRNA are dissociated and replaced by cytoplasmic mRNA binding proteins. The chain is ATP-dependent RNA helicase DDX19A (DDX19A) from Homo sapiens (Human).